Reading from the N-terminus, the 108-residue chain is Phosphoribosyl-ATP pyrophosphatase (108 aa).

The interval 88-108 (VENELDRREGRSGIEEKASRK) is disordered. Basic and acidic residues predominate over residues 91–108 (ELDRREGRSGIEEKASRK).

This sequence belongs to the PRA-PH family.

It is found in the cytoplasm. The enzyme catalyses 1-(5-phospho-beta-D-ribosyl)-ATP + H2O = 1-(5-phospho-beta-D-ribosyl)-5'-AMP + diphosphate + H(+). Its pathway is amino-acid biosynthesis; L-histidine biosynthesis; L-histidine from 5-phospho-alpha-D-ribose 1-diphosphate: step 2/9. The chain is Phosphoribosyl-ATP pyrophosphatase from Paracoccus denitrificans (strain Pd 1222).